The sequence spans 571 residues: Zinc metalloproteinase-disintegrin-like jararhagin (571 aa).

The propeptide occupies 1 to 150; it reads ATRPKGAVQP…KKASQLAFTA (150 aa). The residue at position 151 (Glu-151) is a Pyrrolidone carboxylic acid (Glu). A Peptidase M12B domain is found at 159–355; that stretch reads KYIEFFVVVD…HNPECIINEP (197 aa). The Ca(2+) site is built by Glu-162 and Asp-246. 3 cysteine pairs are disulfide-bonded: Cys-270–Cys-350, Cys-310–Cys-334, and Cys-312–Cys-317. His-295 contacts Zn(2+). The active site involves Glu-296. His-299 and His-305 together coordinate Zn(2+). Asn-333 is a glycosylation site (N-linked (GlcNAc...) asparagine). Ca(2+) is bound by residues Cys-350, Asn-353, Val-365, Asn-368, Leu-370, Glu-372, Glu-375, and Asp-378. Positions 363–449 constitute a Disintegrin domain; sequence PPVCGNELLE…ECPADVFHKN (87 aa). Cystine bridges form between Cys-366/Cys-385, Cys-366/Cys-395, Cys-377/Cys-390, Cys-377/Cys-395, Cys-379/Cys-385, Cys-389/Cys-412, Cys-403/Cys-409, Cys-408/Cys-434, Cys-421/Cys-441, Cys-428/Cys-453, Cys-428/Cys-460, Cys-453/Cys-465, Cys-460/Cys-465, Cys-472/Cys-487, Cys-472/Cys-522, Cys-487/Cys-533, Cys-500/Cys-510, Cys-510/Cys-517, Cys-517/Cys-559, Cys-522/Cys-533, Cys-553/Cys-564, and Cys-559/Cys-564. Positions 427–429 match the D/ECD-tripeptide motif; that stretch reads ECD. The Ca(2+) site is built by Asp-429, Pro-430, Glu-432, Asp-444, and Val-445.

Belongs to the venom metalloproteinase (M12B) family. P-III subfamily. P-IIIb sub-subfamily. As to quaternary structure, monomer (Jararhagin and Jararhagin-C) and dimer (Jaracetin). Zn(2+) is required as a cofactor. In terms of processing, the N-terminus of Jararhagin is blocked. In terms of tissue distribution, expressed by the venom gland.

Its subcellular location is the secreted. The catalysed reaction is Cleavage of 10-His-|-Leu-11, 14-Ala-|-Leu-15, 16-Tyr-|-Leu-17 and 24-Phe-|-Phe-25 bonds in insulin B chain.. Inhibited by EDTA, 1,10 phenanthroline and batimastat (a peptidomimetic MMP inhibitor). In terms of biological role, snake venom zinc metalloproteinase-disintegrin-like jararhagin: causes hemorrhage. This is the result of the degradation of sub-endothelial matrix proteins leading to the disruption of the blood vessel endothelium, with accompanying disturbances in platelet function. It is able to degrade von Willebrand factor (vWF) and it hydrolyzes the alpha-chain of fibrinogen (FGA) while leaving the beta and gamma chains unaffected. It inhibits collagen-induced platelet aggregation through the binding to alpha-2/beta-1 integrin (ITGA2/ITGB1) (collagen receptor), and it cleaves the beta-1 subunit of the same integrin, inhibiting platelet interaction and ultimately causing impairment of signal transduction. It has inability to be affected by the plasma inhibitor alpha(2)-macroglobulin. In fibroblasts, it functions as a collagen-mimetic substrate and, in endothelial cells, it causes apoptosis and indirectly inhibits cell proliferation by release of angiostatin-like compounds. It induces a strong pro-inflammatory response characterized by intense leukocyte accumulation and release of cytokines at the site of the injection. Although hemorrhage and edema are a response to the direct effect of this toxin, jararhagin-induced inflammation and necrosis are dependent on macrophages and key pro-inflammatory cytokines or their receptors. It also possesses anti-tumorgenic properties. Functionally, the monomeric form inhibits collagen- and ADP-induced platelet aggregation, but has no effect on glycoprotein Ib-IX-dependent (GP1BA/GP5/GP9) platelet agglutination. Locally activates the early events of an acute inflammatory response as leukocyte rolling and pro-inflammatory cytokine release. Its function is as follows. The dimeric form jaracetin may be a dimeric form of jararhagin-C. It binds to von Willebrand factor (VWF) and induces its interaction with GPIbalpha (GP1BA) (via the vWF A1 domain), resulting in platelet aggregation. Also binds the alpha-2 subunit of the alpha-2/beta-1 (ITGA2/ITGB1) integrin. It potently induces platelet aggregation in citrated platelet-rich plasma. This chain is Zinc metalloproteinase-disintegrin-like jararhagin, found in Bothrops jararaca (Jararaca).